A 196-amino-acid polypeptide reads, in one-letter code: Interleukin-23 subunit alpha (196 aa).

A signal peptide spans 1 to 21 (MLDCRAIILLWLLPWATQGLA).

It belongs to the IL-6 superfamily. In terms of assembly, heterodimer with IL12B; disulfide-linked. The heterodimer is known as interleukin IL-23. Interacts with IL23R; this interaction enables recruitment of IL12RB1.

It is found in the secreted. Functionally, associates with IL12B to form the pro-inflammatory cytokine IL-23 that plays different roles in innate and adaptive immunity. Released by antigen-presenting cells such as dendritic cells or macrophages, binds to a heterodimeric receptor complex composed of IL12RB1 and IL23R to activate JAK2 and TYK2 which then phosphorylate the receptor to form a docking site leading to the phosphorylation of STAT3 and STAT4. This process leads to activation of several pathways including p38 MAPK or NF-kappa-B and promotes the production of pro-inflammatory cytokines such as interleukin-17A/IL17A. In turn, participates in the early and effective intracellular bacterial clearance. Promotes the expansion and survival of T-helper 17 cells, a CD4-positive helper T-cell subset that produces IL-17, as well as other IL-17-producing cells. The sequence is that of Interleukin-23 subunit alpha (Il23a) from Rattus norvegicus (Rat).